The sequence spans 372 residues: Isoliquiritigenin 2'-O-methyltransferase (372 aa).

S-adenosyl-L-methionine is bound by residues Gly217, Asp240, Asp260, Met261, and Lys274. His278 acts as the Proton acceptor in catalysis.

It belongs to the class I-like SAM-binding methyltransferase superfamily. Cation-independent O-methyltransferase family. COMT subfamily. As to quaternary structure, monomer. Homodimer. As to expression, roots (at protein level). Expressed mainly in roots, and to a lesser extent in root nodules. In the roots, expression is not detected in the root tip or the cells immediately behind the tip, but is detected in tissues starting 1.5-2.0 mm distal to the root tip. Detected in the epidermal and cortical cells of 2 day old roots, with lower levels in vascular tissue.

The catalysed reaction is isoliquiritigenin + S-adenosyl-L-methionine = 2'-O-methylisoliquiritigenin + S-adenosyl-L-homocysteine + H(+). The enzyme catalyses licodione + S-adenosyl-L-methionine = 2'-O-methyllicodione + S-adenosyl-L-homocysteine + H(+). Inhibited by 1 mM Co(2+), Cu(2+), Zn(2+) or Fe(2+). Non-competitively inhibited by S-adenosyl-L-homocysteine. Competitively inhibited by 2'-O-methylisoliquiritigenin. In terms of biological role, methylates the 2'-hydroxyl of isoliquiritigenin and licodione. Does not methylate narigenin chalcone, caffeic acid or daidzein. Involved in the root nodulation initiation by promoting the biosynthesis of nod-inducing molecules. The sequence is that of Isoliquiritigenin 2'-O-methyltransferase from Medicago sativa (Alfalfa).